Consider the following 501-residue polypeptide: Aspartyl/glutamyl-tRNA(Asn/Gln) amidotransferase subunit B (501 aa).

It belongs to the GatB/GatE family. GatB subfamily. As to quaternary structure, heterotrimer of A, B and C subunits.

The enzyme catalyses L-glutamyl-tRNA(Gln) + L-glutamine + ATP + H2O = L-glutaminyl-tRNA(Gln) + L-glutamate + ADP + phosphate + H(+). It catalyses the reaction L-aspartyl-tRNA(Asn) + L-glutamine + ATP + H2O = L-asparaginyl-tRNA(Asn) + L-glutamate + ADP + phosphate + 2 H(+). Functionally, allows the formation of correctly charged Asn-tRNA(Asn) or Gln-tRNA(Gln) through the transamidation of misacylated Asp-tRNA(Asn) or Glu-tRNA(Gln) in organisms which lack either or both of asparaginyl-tRNA or glutaminyl-tRNA synthetases. The reaction takes place in the presence of glutamine and ATP through an activated phospho-Asp-tRNA(Asn) or phospho-Glu-tRNA(Gln). This Agrobacterium fabrum (strain C58 / ATCC 33970) (Agrobacterium tumefaciens (strain C58)) protein is Aspartyl/glutamyl-tRNA(Asn/Gln) amidotransferase subunit B.